A 417-amino-acid chain; its full sequence is NADH-quinone oxidoreductase subunit D 1 (417 aa).

Belongs to the complex I 49 kDa subunit family. In terms of assembly, NDH-1 is composed of 14 different subunits. Subunits NuoB, C, D, E, F, and G constitute the peripheral sector of the complex.

The protein localises to the cell membrane. The catalysed reaction is a quinone + NADH + 5 H(+)(in) = a quinol + NAD(+) + 4 H(+)(out). Functionally, NDH-1 shuttles electrons from NADH, via FMN and iron-sulfur (Fe-S) centers, to quinones in the respiratory chain. The immediate electron acceptor for the enzyme in this species is believed to be ubiquinone. Couples the redox reaction to proton translocation (for every two electrons transferred, four hydrogen ions are translocated across the cytoplasmic membrane), and thus conserves the redox energy in a proton gradient. The chain is NADH-quinone oxidoreductase subunit D 1 from Roseiflexus castenholzii (strain DSM 13941 / HLO8).